A 327-amino-acid polypeptide reads, in one-letter code: ABC transporter periplasmic-binding protein YphF (327 aa).

The signal sequence occupies residues M1–A26.

The protein belongs to the bacterial solute-binding protein 2 family.

It localises to the periplasm. Its function is as follows. Probably part of the binding-protein-dependent transport system YphDEF. The polypeptide is ABC transporter periplasmic-binding protein YphF (yphF) (Escherichia coli (strain K12)).